An 84-amino-acid chain; its full sequence is Coiled-coil-helix-coiled-coil-helix domain-containing protein 7 (84 aa).

The region spanning 12–54 (SNPCLEETDASTKCMDENQYQKDLCTSYFIKYKNCRKFWNGIM) is the CHCH domain. Short sequence motifs (cx9C motif) lie at residues 15–25 (CLEETDASTKC) and 36–46 (CTSYFIKYKNC). Intrachain disulfides connect Cys15–Cys46 and Cys25–Cys36.

The protein belongs to the CHCHD7 family.

The protein resides in the mitochondrion intermembrane space. In Xenopus laevis (African clawed frog), this protein is Coiled-coil-helix-coiled-coil-helix domain-containing protein 7 (chchd7).